The chain runs to 258 residues: Dihydroorotate dehydrogenase B (NAD(+)), electron transfer subunit (258 aa).

The region spanning 1-101 is the FAD-binding FR-type domain; the sequence is MKKAYLTVVS…LGPLGNGYDP (101 aa). FAD is bound by residues 52 to 55, 69 to 71, and 76 to 77; these read RPIS, IYR, and GT. The [2Fe-2S] cluster site is built by cysteine 220, cysteine 225, cysteine 228, and cysteine 243.

Belongs to the PyrK family. As to quaternary structure, heterotetramer of 2 PyrK and 2 PyrD type B subunits. [2Fe-2S] cluster is required as a cofactor. It depends on FAD as a cofactor.

It functions in the pathway pyrimidine metabolism; UMP biosynthesis via de novo pathway; orotate from (S)-dihydroorotate (NAD(+) route): step 1/1. In terms of biological role, responsible for channeling the electrons from the oxidation of dihydroorotate from the FMN redox center in the PyrD type B subunit to the ultimate electron acceptor NAD(+). This chain is Dihydroorotate dehydrogenase B (NAD(+)), electron transfer subunit, found in Bacillus pumilus (strain SAFR-032).